Reading from the N-terminus, the 469-residue chain is 3-isopropylmalate dehydratase large subunit (469 aa).

Positions 349, 409, and 412 each coordinate [4Fe-4S] cluster. The segment at 424–443 (QISASSSNRNFKGRQGSPSG) is disordered.

This sequence belongs to the aconitase/IPM isomerase family. LeuC type 1 subfamily. Heterodimer of LeuC and LeuD. [4Fe-4S] cluster serves as cofactor.

The enzyme catalyses (2R,3S)-3-isopropylmalate = (2S)-2-isopropylmalate. Its pathway is amino-acid biosynthesis; L-leucine biosynthesis; L-leucine from 3-methyl-2-oxobutanoate: step 2/4. Its function is as follows. Catalyzes the isomerization between 2-isopropylmalate and 3-isopropylmalate, via the formation of 2-isopropylmaleate. This Thermosynechococcus vestitus (strain NIES-2133 / IAM M-273 / BP-1) protein is 3-isopropylmalate dehydratase large subunit.